Consider the following 242-residue polypeptide: Large ribosomal subunit protein uL30x (242 aa).

It belongs to the universal ribosomal protein uL30 family.

The sequence is that of Large ribosomal subunit protein uL30x (RPL7C) from Arabidopsis thaliana (Mouse-ear cress).